A 314-amino-acid chain; its full sequence is Methionyl-tRNA formyltransferase (314 aa).

112-115 (SLLP) serves as a coordination point for (6S)-5,6,7,8-tetrahydrofolate.

The protein belongs to the Fmt family.

It carries out the reaction L-methionyl-tRNA(fMet) + (6R)-10-formyltetrahydrofolate = N-formyl-L-methionyl-tRNA(fMet) + (6S)-5,6,7,8-tetrahydrofolate + H(+). Attaches a formyl group to the free amino group of methionyl-tRNA(fMet). The formyl group appears to play a dual role in the initiator identity of N-formylmethionyl-tRNA by promoting its recognition by IF2 and preventing the misappropriation of this tRNA by the elongation apparatus. The protein is Methionyl-tRNA formyltransferase of Buchnera aphidicola subsp. Schizaphis graminum (strain Sg).